Consider the following 223-residue polypeptide: Killer cell lectin-like receptor subfamily B member 1A (223 aa).

At 1–43 (MDTARVYLSLKPSKTAAGAQCVSPPSLPPDACRCPRSHRLALK) the chain is on the cytoplasmic side. The LCK-binding motif signature appears at 32-35 (CRCP). The chain crosses the membrane as a helical; Signal-anchor for type II membrane protein span at residues 44-63 (LSCAGLILLVLALVGMSILV). At 64–223 (RVLVQKPSVE…LKCECMCNDS (160 aa)) the chain is on the extracellular side. The C-type lectin domain maps to 93–212 (KCPKDWLSHR…DSDNIWVCQK (120 aa)). 3 cysteine pairs are disulfide-bonded: cysteine 94–cysteine 105, cysteine 122–cysteine 210, and cysteine 189–cysteine 202.

Homodimer; disulfide-linked. Interacts with tyrosine kinase LCK. As to expression, expressed in natural killer cells.

It localises to the membrane. Its function is as follows. Plays a stimulatory role on natural killer (NK) cell cytotoxicity. This is Killer cell lectin-like receptor subfamily B member 1A (Klrb1a) from Rattus norvegicus (Rat).